The chain runs to 82 residues: Cytochrome b559 subunit alpha (82 aa).

Residues 22–36 (IIHAVTLPAIFIAGF) traverse the membrane as a helical segment. Histidine 24 is a heme binding site.

The protein belongs to the PsbE/PsbF family. In terms of assembly, heterodimer of an alpha subunit and a beta subunit. PSII is composed of 1 copy each of membrane proteins PsbA, PsbB, PsbC, PsbD, PsbE, PsbF, PsbH, PsbI, PsbJ, PsbK, PsbL, PsbM, PsbT, PsbX, PsbY, Psb30/Ycf12, peripheral proteins PsbO, CyanoQ (PsbQ), PsbU, PsbV and a large number of cofactors. It forms dimeric complexes. Requires heme b as cofactor.

Its subcellular location is the cellular thylakoid membrane. In terms of biological role, this b-type cytochrome is tightly associated with the reaction center of photosystem II (PSII). PSII is a light-driven water:plastoquinone oxidoreductase that uses light energy to abstract electrons from H(2)O, generating O(2) and a proton gradient subsequently used for ATP formation. It consists of a core antenna complex that captures photons, and an electron transfer chain that converts photonic excitation into a charge separation. The polypeptide is Cytochrome b559 subunit alpha (Prochlorococcus marinus (strain MIT 9211)).